An 828-amino-acid chain; its full sequence is Leucine--tRNA ligase (828 aa).

Residues 36-46 carry the 'HIGH' region motif; that stretch reads PYPSGKIHIGH. The short motif at 595-599 is the 'KMSKS' region element; that stretch reads KMSKS. Lys598 contributes to the ATP binding site.

Belongs to the class-I aminoacyl-tRNA synthetase family.

It is found in the cytoplasm. It catalyses the reaction tRNA(Leu) + L-leucine + ATP = L-leucyl-tRNA(Leu) + AMP + diphosphate. The polypeptide is Leucine--tRNA ligase (Rickettsia prowazekii (strain Madrid E)).